We begin with the raw amino-acid sequence, 509 residues long: GRAS family protein RAD1 (509 aa).

One can recognise a GRAS domain in the interval 125–508; the sequence is EDGCADGMRL…KPIVAASCWK (384 aa). The tract at residues 132 to 198 is leucine repeat I (LRI); the sequence is MRLVQLLIAC…IQPIGSGAGV (67 aa). The tract at residues 217–286 is VHIID; sequence YRLVYETCPH…SGHGRVRRLR (70 aa). A VHIID motif is present at residues 248 to 252; sequence VHVVD. The interval 299–331 is leucine repeat II (LRII); sequence AIGDELSDYANNLGINLEFSVVQKNLENLQPED. The tract at residues 340 to 431 is PFYRE; it reads LVVNSILQLH…QFYFAEEIKN (92 aa). The tract at residues 434 to 508 is SAW; the sequence is SCEGPLRMER…KPIVAASCWK (75 aa).

It belongs to the GRAS family. As to quaternary structure, interacts with RAM1 and NSP2. As to expression, expressed in roots under low phosphate (Pi) conditions.

The protein resides in the nucleus. In terms of biological role, transcription factor acting as a regulator of arbuscular mycorrhiza (AM)-related genes (e.g. PT4, STR and RAM2). Required for the morphogenesis of arbuscules upon symbiosis with AM fungi (e.g. Rhizophagus irregularis). Also involved in restricting mycorrhizal colonization of the root meristem. The sequence is that of GRAS family protein RAD1 from Lotus japonicus (Lotus corniculatus var. japonicus).